The following is a 310-amino-acid chain: Olfactory receptor 9Q1 (310 aa).

The Extracellular portion of the chain corresponds to 1–25 (MAEMNLTLVTEFLLIAFTEYPEWAL). A glycan (N-linked (GlcNAc...) asparagine) is linked at Asn-5. Residues 26 to 46 (PLFLLFLFMYLITVLGNLEMI) traverse the membrane as a helical segment. At 47 to 54 (ILILMDHQ) the chain is on the cytoplasmic side. The chain crosses the membrane as a helical span at residues 55–75 (LHAPMYFLLSHLAFMDVCYSS). Residues 76–99 (ITVPQMLAVLLEHGAALSYTRCAA) lie on the Extracellular side of the membrane. A disulfide bridge links Cys-97 with Cys-189. The chain crosses the membrane as a helical span at residues 100-120 (QFFLFTFFGSIDCYLLALMAY). Topologically, residues 121 to 139 (DRYLAVCQPLLYVTILTQQ) are cytoplasmic. Residues 140–160 (ARLSLVAGAYVAGLISALVRT) traverse the membrane as a helical segment. Topologically, residues 161–197 (VSAFTLSFCGTSEIDFIFCDLPPLLKLTCGESYTQEV) are extracellular. The chain crosses the membrane as a helical span at residues 198-217 (LIIMFAIFVIPASMVVILVS). Topologically, residues 218 to 236 (YLFIIVAIMGIPAGSQAKT) are cytoplasmic. A helical transmembrane segment spans residues 237–257 (FSTCTSHLTAVSLFFGTLIFM). Residues 258–270 (YLRGNSDQSSEKN) are Extracellular-facing. Residues 271–291 (RVVSVLYTEVIPMLNPLIYSL) traverse the membrane as a helical segment. Residues 292 to 310 (RNKEVKEALRKILNRAKLS) are Cytoplasmic-facing.

It belongs to the G-protein coupled receptor 1 family.

Its subcellular location is the cell membrane. In terms of biological role, odorant receptor. This Homo sapiens (Human) protein is Olfactory receptor 9Q1 (OR9Q1).